Reading from the N-terminus, the 39-residue chain is Cecropin-D-like peptide (39 aa).

As to expression, hemolymph.

The protein resides in the secreted. Functionally, cecropins have lytic and antibacterial activity against several Gram-positive and Gram-negative bacteria. Has antibacterial activity against the Gram-positive bacteria M.luteus (MIC=34.4 uM), L.monocytogenes (MIC=34.4 uM), and S.lutea (MIC=34.4 uM), and the Gram-negative bacterium E.coli D31 (MIC=8.6 uM). Lacks antibacterial activity against the Gram-positive bacterium B.circulans, and the Gram-negative bacteria E.coli ATCC 25922 and S.typhimurium. Has antifungal activity against A.niger, but lacks antifungal activity against C.albicans, C.wickerhamii, F.oxysporum, P.pastoris, P.tannophilus, S.cerevisiae, T.harzianum, and Z.marxianus. The chain is Cecropin-D-like peptide from Galleria mellonella (Greater wax moth).